Consider the following 265-residue polypeptide: 4-hydroxy-tetrahydrodipicolinate reductase (265 aa).

Residues 7 to 12 (GASGRM) and aspartate 33 each bind NAD(+). Arginine 34 lines the NADP(+) pocket. NAD(+) is bound by residues 96 to 98 (GTT) and 120 to 123 (AANM). Histidine 153 serves as the catalytic Proton donor/acceptor. Histidine 154 is a (S)-2,3,4,5-tetrahydrodipicolinate binding site. Lysine 157 acts as the Proton donor in catalysis. 163-164 (GT) is a binding site for (S)-2,3,4,5-tetrahydrodipicolinate.

Belongs to the DapB family.

The protein localises to the cytoplasm. It catalyses the reaction (S)-2,3,4,5-tetrahydrodipicolinate + NAD(+) + H2O = (2S,4S)-4-hydroxy-2,3,4,5-tetrahydrodipicolinate + NADH + H(+). The catalysed reaction is (S)-2,3,4,5-tetrahydrodipicolinate + NADP(+) + H2O = (2S,4S)-4-hydroxy-2,3,4,5-tetrahydrodipicolinate + NADPH + H(+). The protein operates within amino-acid biosynthesis; L-lysine biosynthesis via DAP pathway; (S)-tetrahydrodipicolinate from L-aspartate: step 4/4. In terms of biological role, catalyzes the conversion of 4-hydroxy-tetrahydrodipicolinate (HTPA) to tetrahydrodipicolinate. The polypeptide is 4-hydroxy-tetrahydrodipicolinate reductase (Burkholderia lata (strain ATCC 17760 / DSM 23089 / LMG 22485 / NCIMB 9086 / R18194 / 383)).